The chain runs to 568 residues: Proline--tRNA ligase (568 aa).

Belongs to the class-II aminoacyl-tRNA synthetase family. ProS type 1 subfamily. As to quaternary structure, homodimer.

It is found in the cytoplasm. It catalyses the reaction tRNA(Pro) + L-proline + ATP = L-prolyl-tRNA(Pro) + AMP + diphosphate. In terms of biological role, catalyzes the attachment of proline to tRNA(Pro) in a two-step reaction: proline is first activated by ATP to form Pro-AMP and then transferred to the acceptor end of tRNA(Pro). As ProRS can inadvertently accommodate and process non-cognate amino acids such as alanine and cysteine, to avoid such errors it has two additional distinct editing activities against alanine. One activity is designated as 'pretransfer' editing and involves the tRNA(Pro)-independent hydrolysis of activated Ala-AMP. The other activity is designated 'posttransfer' editing and involves deacylation of mischarged Ala-tRNA(Pro). The misacylated Cys-tRNA(Pro) is not edited by ProRS. The protein is Proline--tRNA ligase of Listeria monocytogenes serotype 4a (strain HCC23).